Reading from the N-terminus, the 193-residue chain is PBAN-type neuropeptides (193 aa).

The first 19 residues, 1-19 (MYGAVLPGLFFIFISCVVA), serve as a signal peptide directing secretion. Position 46 is an isoleucine amide (Ile-46). 2 positions are modified to leucine amide: Leu-102 and Leu-122. Residues 124–158 (RRLADDTPATPADQEMYRPDPEQIDSRTKYFSPRL) are disordered. A compositionally biased stretch (basic and acidic residues) spans 138–151 (EMYRPDPEQIDSRT). Leucine amide occurs at positions 158 and 168. A propeptide spanning residues 186–193 (STNKTQST) is cleaved from the precursor.

Belongs to the pyrokinin family. In terms of tissue distribution, expressed in the mandibular, maxillary and labial neuromeres of the male and female brain-subesophageal ganglions, in the corpora cardiaca and all around the corpora allata, and at a lower level in the brain near the calyx and pedunculus of the mushroom body (at protein level). Expressed in larvae and adult of both sexes (at protein level). Expressed in corpora cardiaca (CC), corpora allata (CA) and gnathal ganglion (GNG) (at protein level). Expression in CC and CA detected in most animals, in GNG in some (at protein level). As to expression, expression not detected in CC, CA, AL or GNG (at protein level). In terms of tissue distribution, expressed in corpora cardiaca (CC), corpora allata (CA), antennal lobe (AL) and gnathal ganglion (GNG) (at protein level). Expression in CC, CA and GNG detected in most animals, expression in AL detected in few (at protein level). Expressed in corpora cardiaca (CC), corpora allata (CA), antennal lobe (AL) and gnathal ganglion (GNG) (at protein level). Expression in CC, CA and GNG detected in all animals, expression in AL detected in some (at protein level). As to expression, expressed in corpora cardiaca (CC), corpora allata (CA), antennal lobe (AL) and gnathal ganglion (GNG) (at protein level). Expression in CC, CA and GNG detected in most animals, expression in AL detected in some animals (at protein level).

Its subcellular location is the secreted. In terms of biological role, a hormone that controls sex pheromone production in female moths and pheromone responsiveness in male. The protein is PBAN-type neuropeptides of Agrotis ipsilon (Black cutworm moth).